A 123-amino-acid chain; its full sequence is MAKAIYVKFDTPEELANQAEEALKTAQDSGKVAKGTNEVTKFIERGDAALVVIAEDVDPAEIVAHIPVLADEKEIPYIYLPTKEQVGGAAGLTVGTASACIVDAGDAEGDVAEIVEKIAELKE.

Belongs to the eukaryotic ribosomal protein eL8 family. As to quaternary structure, part of the 50S ribosomal subunit. Probably part of the RNase P complex.

It localises to the cytoplasm. Multifunctional RNA-binding protein that recognizes the K-turn motif in ribosomal RNA, the RNA component of RNase P, box H/ACA, box C/D and box C'/D' sRNAs. The protein is Large ribosomal subunit protein eL8 of Methanobrevibacter smithii (strain ATCC 35061 / DSM 861 / OCM 144 / PS).